The chain runs to 688 residues: Glycine--tRNA ligase beta subunit (688 aa).

Belongs to the class-II aminoacyl-tRNA synthetase family. As to quaternary structure, tetramer of two alpha and two beta subunits.

It localises to the cytoplasm. It carries out the reaction tRNA(Gly) + glycine + ATP = glycyl-tRNA(Gly) + AMP + diphosphate. The sequence is that of Glycine--tRNA ligase beta subunit from Aliivibrio fischeri (strain ATCC 700601 / ES114) (Vibrio fischeri).